Reading from the N-terminus, the 433-residue chain is Adenylosuccinate synthetase (433 aa).

Residues 12-18 (GDEGKGK) and 40-42 (GHT) each bind GTP. The active-site Proton acceptor is Asp13. Mg(2+) is bound by residues Asp13 and Gly40. Residues 13–16 (DEGK), 38–41 (NAGH), Thr130, Arg144, Gln225, Thr240, and Arg304 each bind IMP. Residue His41 is the Proton donor of the active site. Substrate is bound at residue 300–306 (ATTGRPR). Residues Arg306, 332–334 (KLD), and 414–416 (SIG) contribute to the GTP site.

It belongs to the adenylosuccinate synthetase family. Homodimer. Mg(2+) is required as a cofactor.

It localises to the cytoplasm. It catalyses the reaction IMP + L-aspartate + GTP = N(6)-(1,2-dicarboxyethyl)-AMP + GDP + phosphate + 2 H(+). The protein operates within purine metabolism; AMP biosynthesis via de novo pathway; AMP from IMP: step 1/2. Its function is as follows. Plays an important role in the de novo pathway of purine nucleotide biosynthesis. Catalyzes the first committed step in the biosynthesis of AMP from IMP. This Geobacter sulfurreducens (strain ATCC 51573 / DSM 12127 / PCA) protein is Adenylosuccinate synthetase.